A 756-amino-acid chain; its full sequence is Inactive carboxypeptidase-like protein X2 (756 aa).

The signal sequence occupies residues 1–25; it reads MSRPGTATPALALVLLAVTLAGVGA. Positions 51–131 are disordered; that stretch reads EPELETFSPP…DHSVRVARED (81 aa). A compositionally biased stretch (basic and acidic residues) spans 68-78; it reads EWERRPQEPRP. Positions 79–90 are enriched in basic residues; it reads PKRATKPKKAPK. Basic and acidic residues predominate over residues 113-131; that stretch reads KSSEKAANDDHSVRVARED. An F5/8 type C domain is found at 134–293; it reads ESCPPLGLET…ICMRMEILGC (160 aa). An intrachain disulfide couples Cys136 to Cys293. Residues Asn231, Asn241, Asn281, Asn337, and Asn491 are each glycosylated (N-linked (GlcNAc...) asparagine). Residues 317–640 enclose the Peptidase M14 domain; that stretch reads KHHNYKEMRQ…ESLIVFMEQV (324 aa).

It belongs to the peptidase M14 family.

It localises to the secreted. Functionally, may be involved in cell-cell interactions. In Homo sapiens (Human), this protein is Inactive carboxypeptidase-like protein X2 (CPXM2).